Reading from the N-terminus, the 306-residue chain is Beta-lactamase (306 aa).

The signal sequence occupies residues methionine 1 to alanine 34. Residue serine 89 is the Acyl-ester intermediate of the active site. Lysine 251–glycine 253 is a binding site for substrate.

Belongs to the class-A beta-lactamase family.

It catalyses the reaction a beta-lactam + H2O = a substituted beta-amino acid. In terms of biological role, this protein is a beta-lactamase with a substrate specificity for penicillins. In Bacillus amyloliquefaciens (Bacillus velezensis), this protein is Beta-lactamase (penP).